We begin with the raw amino-acid sequence, 150 residues long: MRCPFCGYEDTFVIDTREIEDQKVIRRRRECPNCKNRFTTYERIEEKPIMVIKKDGRREPFDRNKLLAGLQRAVVKRNIDNEKLEAIIDEIITNIRKQGVSEITSKEIGKMVLEKLKDLDAVAYVRFASVYQEFSSLEEFAKLLSQMKEE.

The segment at 3-34 (CPFCGYEDTFVIDTREIEDQKVIRRRRECPNC) is a zinc-finger region. The 91-residue stretch at 49-139 (IMVIKKDGRR…VYQEFSSLEE (91 aa)) folds into the ATP-cone domain.

It belongs to the NrdR family. Zn(2+) serves as cofactor.

In terms of biological role, negatively regulates transcription of bacterial ribonucleotide reductase nrd genes and operons by binding to NrdR-boxes. The polypeptide is Transcriptional repressor NrdR (Dictyoglomus turgidum (strain DSM 6724 / Z-1310)).